Reading from the N-terminus, the 191-residue chain is UPF0312 protein Sputcn32_2702 (191 aa).

The signal sequence occupies residues 1-22 (MKKQLLSALIGVSLLAPMAASA).

It belongs to the UPF0312 family. Type 1 subfamily.

Its subcellular location is the periplasm. This Shewanella putrefaciens (strain CN-32 / ATCC BAA-453) protein is UPF0312 protein Sputcn32_2702.